The primary structure comprises 542 residues: NXPE family member 4 (542 aa).

An N-terminal signal peptide occupies residues 1–26; that stretch reads MKMMASRKSLWVLLFIVIFWISFTVF. Residues Asn91, Asn92, Asn159, and Asn223 are each glycosylated (N-linked (GlcNAc...) asparagine).

Belongs to the NXPE family.

The protein localises to the secreted. This chain is NXPE family member 4 (Nxpe4), found in Rattus norvegicus (Rat).